The chain runs to 103 residues: Co-chaperonin GroES (103 aa).

This sequence belongs to the GroES chaperonin family. In terms of assembly, heptamer of 7 subunits arranged in a ring. Interacts with the chaperonin GroEL.

The protein resides in the cytoplasm. Its function is as follows. Together with the chaperonin GroEL, plays an essential role in assisting protein folding. The GroEL-GroES system forms a nano-cage that allows encapsulation of the non-native substrate proteins and provides a physical environment optimized to promote and accelerate protein folding. GroES binds to the apical surface of the GroEL ring, thereby capping the opening of the GroEL channel. The protein is Co-chaperonin GroES of Synechococcus sp. (strain CC9902).